A 225-amino-acid polypeptide reads, in one-letter code: CRISPR pre-crRNA endoribonuclease Cas5d (225 aa).

This sequence belongs to the CRISPR-associated protein Cas5 family. Subtype I-C/Dvulg subfamily. Requires Does not require a metal cofactor. as cofactor.

In terms of biological role, CRISPR (clustered regularly interspaced short palindromic repeat) is an adaptive immune system that provides protection against mobile genetic elements (viruses, transposable elements and conjugative plasmids). CRISPR clusters contain spacers, sequences complementary to antecedent mobile elements, and target invading nucleic acids. CRISPR clusters are transcribed and processed into CRISPR RNA (crRNA). This protein is a sequence-specific endonuclease that cleaves pre-crRNA at G21 into mature crRNA. Does not cleave pre-crRNA associated with the T.thermophilus strain HB27 Cas5 protein (AC Q746C2) CRISPR locus. The reaction mechanism may proceed by an intramolecular attack of the 2'-hydroxyl group of G21 on the scissile phosphodiester, cutting the precursor 3' to G21 residue yielding 5'-hydroxyl and 2' and/or 3' ends lacking a hydroxyl group (perhaps a 2'/3' cyclic phosphodiester). The sequence is that of CRISPR pre-crRNA endoribonuclease Cas5d from Mannheimia succiniciproducens (strain KCTC 0769BP / MBEL55E).